Here is a 112-residue protein sequence, read N- to C-terminus: MTALTQMKCEACQADAPKVTDEELAELIRMIPDWGVQVRDGIMQLERVYKFKNFKLAMAFTNKLADLAEEEFHHPGILTEWGKVTVTWWSHSIKGLHKNDFIMAAKTDQLLD.

This sequence belongs to the pterin-4-alpha-carbinolamine dehydratase family.

It carries out the reaction (4aS,6R)-4a-hydroxy-L-erythro-5,6,7,8-tetrahydrobiopterin = (6R)-L-erythro-6,7-dihydrobiopterin + H2O. The protein is Putative pterin-4-alpha-carbinolamine dehydratase of Shewanella sp. (strain MR-4).